Here is an 871-residue protein sequence, read N- to C-terminus: Leucine--tRNA ligase (871 aa).

Positions 43–53 (PYPSGRIHIGH) match the 'HIGH' region motif. The 'KMSKS' region signature appears at 629–633 (KMSKS). Position 632 (Lys-632) interacts with ATP.

It belongs to the class-I aminoacyl-tRNA synthetase family.

Its subcellular location is the cytoplasm. It catalyses the reaction tRNA(Leu) + L-leucine + ATP = L-leucyl-tRNA(Leu) + AMP + diphosphate. The chain is Leucine--tRNA ligase from Chelativorans sp. (strain BNC1).